Here is a 388-residue protein sequence, read N- to C-terminus: MQLTIIVLDSVGAGALPDAAAFGDAGAHTLNHTLKQAPVPLPHLARLGLGKLPTIDTSPETVPADAEVTGAYGRMREVSPGKDTSTGHWEFMGVQLEHPFQVFPDGFPPEVMDRFDAATGRGHLCNKPYSGTDVIRDYGEEHRRTGFPIVYTSADSVFQIAAHEDVVPLETLYEWCRAAREILQGEYAVARVIARPFRGEPPFERANEHRRDFSLTPPRTVLDALKEAGKDVVGIGKIPDIYAGQGFTESIHTDDNADGIRKTLERMKAGVDGLIFTNLVDTDAKFGHRRDPAGYSNALAEFDRALPDLIAALPEDGLLIILSDHGNDPTWHGTDHTREYGLLLAYGHGLSARDLGERETFADVGATVAEALGAQWDGPGTSFWNELR.

Mn(2+) is bound by residues D9, D283, H288, D324, H325, and H336.

Belongs to the phosphopentomutase family. Requires Mn(2+) as cofactor.

Its subcellular location is the cytoplasm. It carries out the reaction 2-deoxy-alpha-D-ribose 1-phosphate = 2-deoxy-D-ribose 5-phosphate. The enzyme catalyses alpha-D-ribose 1-phosphate = D-ribose 5-phosphate. The protein operates within carbohydrate degradation; 2-deoxy-D-ribose 1-phosphate degradation; D-glyceraldehyde 3-phosphate and acetaldehyde from 2-deoxy-alpha-D-ribose 1-phosphate: step 1/2. Functionally, isomerase that catalyzes the conversion of deoxy-ribose 1-phosphate (dRib-1-P) and ribose 1-phosphate (Rib-1-P) to deoxy-ribose 5-phosphate (dRib-5-P) and ribose 5-phosphate (Rib-5-P), respectively. This Deinococcus radiodurans (strain ATCC 13939 / DSM 20539 / JCM 16871 / CCUG 27074 / LMG 4051 / NBRC 15346 / NCIMB 9279 / VKM B-1422 / R1) protein is Phosphopentomutase.